Here is a 526-residue protein sequence, read N- to C-terminus: MDDAGKITSTSHLIVSPDEGTFLDLFKHIVLSDLGSGAKFFRASDQRVPATAAYYSRWPVSVFICKILQLFQMPAAMLGHLTDFLLNFYYQNHGFLGILRNIFLIRLKIPKRGEADFISTIGYLDSRMDLHGTPMVSHQADEVISNADNPSLKEGHNSKIKGALGNRSLMDLCIMASKLAYENTKVVERVVAEHWKMHFVADYGGMNYFQDARNTHAFIFCDKPKDANLIVISFRGTGPFSIPNWCTDFDFSLVGLGDAGSVHVGFLEAMGLGHRNSISSFETSINTKSPGSITELRKESEMAPDHLVWAYDGVYFLAASTLKGLLKDHKNAKFVVTGHSLGGALAILFTCILEIQQETEVLDRLLNVYTFGQPRIGNYNLGYFMQNRLNFPERRYFRVVYCNDMVPRVPFDDVFFTFEHFGTCIYYDSRFFGYFTKEEPSRNPFGIENAISAHITAWWELWRSFILNHVYGAEYKETWESRMFRILGLFLPGVAAHSPVNYVNSVRLGRELAIPLMSLKMMAQGY.

The chain crosses the membrane as a helical span at residues glycine 79–leucine 99. Positions glycine 338 to glycine 342 match the GXSXG motif. Serine 340 (nucleophile) is an active-site residue. Active-site charge relay system residues include aspartate 404 and histidine 497.

This sequence belongs to the AB hydrolase superfamily. Lipase family.

It localises to the membrane. It carries out the reaction a triacylglycerol + H2O = a diacylglycerol + a fatty acid + H(+). In terms of biological role, acid lipase that can hydrolyze a range of triacylglycerols but is not active on phospholipids. In vitro, hydrolyzes triolein, trilinolein, triricinolein, tripalmitin, trilaurin and tricaprin. May play a role in the regulation of lipolysis in germinating seeds. The polypeptide is Triacylglycerol lipase OBL1 (Ricinus communis (Castor bean)).